The primary structure comprises 291 residues: 33 kDa chaperonin (291 aa).

2 cysteine pairs are disulfide-bonded: Cys-229/Cys-231 and Cys-262/Cys-265.

The protein belongs to the HSP33 family. Post-translationally, under oxidizing conditions two disulfide bonds are formed involving the reactive cysteines. Under reducing conditions zinc is bound to the reactive cysteines and the protein is inactive.

The protein localises to the cytoplasm. In terms of biological role, redox regulated molecular chaperone. Protects both thermally unfolding and oxidatively damaged proteins from irreversible aggregation. Plays an important role in the bacterial defense system toward oxidative stress. This is 33 kDa chaperonin from Vibrio cholerae serotype O1 (strain ATCC 39315 / El Tor Inaba N16961).